Here is a 356-residue protein sequence, read N- to C-terminus: MATITNNPDKEKALNLVLNQIERSFGKGSIMRLGDAARMRVETIPSGALTLDLALGGGLPKGRVIEIYGPESSGKTTLALHAIAEVQKAGGVAAFVDAEHALDPTYSEVLGVDIHNLLVAQPDTGESALEIVDQLVRSAAVDIVVVDSVAALVPRAEIEGEMGDNQVGLQARLMSKALRKIAGNIGKSGCVVIFLNQLRQKIGVTYGSPEVTTGGTALKFYASVRLDIRRIQTLKKGSEGEYGIRAKVKVAKNKVAPPFRIAEFDIIFGKGISQMGCMIDMAEHTDVITRKGAWYSYNGENIAQGRDNAVKYLEENLDVAAIIEKQVREKLDIASLSFAGSGNDDEEEFEAVEAEE.

Residue 69–76 coordinates ATP; it reads GPESSGKT.

Belongs to the RecA family.

The protein localises to the cytoplasm. Functionally, can catalyze the hydrolysis of ATP in the presence of single-stranded DNA, the ATP-dependent uptake of single-stranded DNA by duplex DNA, and the ATP-dependent hybridization of homologous single-stranded DNAs. It interacts with LexA causing its activation and leading to its autocatalytic cleavage. The protein is Protein RecA of Gloeothece citriformis (strain PCC 7424) (Cyanothece sp. (strain PCC 7424)).